The chain runs to 292 residues: MNNHFKCIGIVGHPRHPTALTTHEMLYRWLCTKGYEVIVEQQIAHELQLKNVKTGTLAEIGQLADLAVVVGGDGNMLGATRTLARYDIKVIGINRGNLGFLTDLDPDNAQQQLADVLEGHYISEKRFLLEAQVCQQDCQKRISTAINEVVLHPGKVAHMIEFEVYIDEIFAFSQRSDGLIISTPTGSTAYSLSAGGPILTPSLDAITLVPMFPHTLSARPLVINSSSTIRLRFSHRRNDLEISCDSQIALPIQEGEDVLIRRCDYHLNLIHPKDYSYFNTLSTKLGWSKKLF.

D73 functions as the Proton acceptor in the catalytic mechanism. Residues 73 to 74 (DG), 147 to 148 (NE), H158, R175, D177, 188 to 193 (TAYSLS), and Q247 contribute to the NAD(+) site.

Belongs to the NAD kinase family. A divalent metal cation is required as a cofactor.

It is found in the cytoplasm. The enzyme catalyses NAD(+) + ATP = ADP + NADP(+) + H(+). Its function is as follows. Involved in the regulation of the intracellular balance of NAD and NADP, and is a key enzyme in the biosynthesis of NADP. Catalyzes specifically the phosphorylation on 2'-hydroxyl of the adenosine moiety of NAD to yield NADP. This Escherichia coli O157:H7 protein is NAD kinase.